Consider the following 298-residue polypeptide: N-acetylmuramic acid 6-phosphate etherase 2 (298 aa).

Positions Ile51–Arg214 constitute an SIS domain. The Proton donor role is filled by Glu79. Residue Glu110 is part of the active site.

This sequence belongs to the GCKR-like family. MurNAc-6-P etherase subfamily. In terms of assembly, homodimer.

It catalyses the reaction N-acetyl-D-muramate 6-phosphate + H2O = N-acetyl-D-glucosamine 6-phosphate + (R)-lactate. It participates in amino-sugar metabolism; N-acetylmuramate degradation. Functionally, specifically catalyzes the cleavage of the D-lactyl ether substituent of MurNAc 6-phosphate, producing GlcNAc 6-phosphate and D-lactate. In Bacillus licheniformis (strain ATCC 14580 / DSM 13 / JCM 2505 / CCUG 7422 / NBRC 12200 / NCIMB 9375 / NCTC 10341 / NRRL NRS-1264 / Gibson 46), this protein is N-acetylmuramic acid 6-phosphate etherase 2.